The sequence spans 54 residues: Ovomucoid (54 aa).

The region spanning 4–54 (VDCSDYPKPVCSPENMPVCGSDSKTYSNKCDFCNAVADSNGTLTLSHFGKC) is the Kazal-like domain. 3 cysteine pairs are disulfide-bonded: Cys6-Cys36, Cys14-Cys33, and Cys22-Cys54. N-linked (GlcNAc...) asparagine glycosylation is present at Asn43.

It is found in the secreted. The chain is Ovomucoid from Nycticorax nycticorax (Black-crowned night-heron).